The following is a 319-amino-acid chain: HPr kinase/phosphorylase (319 aa).

Residues His137 and Lys158 contribute to the active site. Position 152-159 (152-159 (GDSGVGKS)) interacts with ATP. Ser159 contributes to the Mg(2+) binding site. The active-site Proton acceptor; for phosphorylation activity. Proton donor; for dephosphorylation activity is the Asp176. An important for the catalytic mechanism of both phosphorylation and dephosphorylation region spans residues 201-210 (MEIRGLGIIN). Glu202 is a binding site for Mg(2+). Arg243 is a catalytic residue. Residues 264 to 269 (PVRPGR) form an important for the catalytic mechanism of dephosphorylation region.

The protein belongs to the HPrK/P family. Homohexamer. Mg(2+) serves as cofactor.

The catalysed reaction is [HPr protein]-L-serine + ATP = [HPr protein]-O-phospho-L-serine + ADP + H(+). The enzyme catalyses [HPr protein]-O-phospho-L-serine + phosphate + H(+) = [HPr protein]-L-serine + diphosphate. Catalyzes the ATP- as well as the pyrophosphate-dependent phosphorylation of a specific serine residue in HPr, a phosphocarrier protein of the phosphoenolpyruvate-dependent sugar phosphotransferase system (PTS). HprK/P also catalyzes the pyrophosphate-producing, inorganic phosphate-dependent dephosphorylation (phosphorolysis) of seryl-phosphorylated HPr (P-Ser-HPr). This is HPr kinase/phosphorylase from Treponema pallidum subsp. pallidum (strain SS14).